Reading from the N-terminus, the 365-residue chain is Probable caffeine synthase 5 (365 aa).

Y18 is a binding site for S-adenosyl-L-homocysteine. T25 lines the caffeine pocket. 6 residues coordinate S-adenosyl-L-homocysteine: C61, N66, D98, L99, S134, and F135. 3 residues coordinate caffeine: Y152, H155, and W156. Mg(2+) contacts are provided by N173, D259, F261, and N262. Position 317 (F317) interacts with caffeine.

It belongs to the methyltransferase superfamily. Type-7 methyltransferase family. Requires Mg(2+) as cofactor.

Its pathway is alkaloid biosynthesis. May be involved in the biosynthesis of caffeine. The polypeptide is Probable caffeine synthase 5 (Camellia sinensis (Tea plant)).